An 89-amino-acid chain; its full sequence is Small ribosomal subunit protein uS15 (89 aa).

The protein belongs to the universal ribosomal protein uS15 family. Part of the 30S ribosomal subunit. Forms a bridge to the 50S subunit in the 70S ribosome, contacting the 23S rRNA.

In terms of biological role, one of the primary rRNA binding proteins, it binds directly to 16S rRNA where it helps nucleate assembly of the platform of the 30S subunit by binding and bridging several RNA helices of the 16S rRNA. Functionally, forms an intersubunit bridge (bridge B4) with the 23S rRNA of the 50S subunit in the ribosome. The sequence is that of Small ribosomal subunit protein uS15 from Shewanella baltica (strain OS223).